The chain runs to 88 residues: Small ribosomal subunit protein uS15c (88 aa).

It belongs to the universal ribosomal protein uS15 family. In terms of assembly, part of the 30S ribosomal subunit.

The protein resides in the plastid. It localises to the chloroplast. This Nasturtium officinale (Watercress) protein is Small ribosomal subunit protein uS15c (rps15).